Reading from the N-terminus, the 227-residue chain is Uracil-DNA glycosylase (227 aa).

The Proton acceptor role is filled by D68.

The protein belongs to the uracil-DNA glycosylase (UDG) superfamily. UNG family.

It localises to the cytoplasm. The enzyme catalyses Hydrolyzes single-stranded DNA or mismatched double-stranded DNA and polynucleotides, releasing free uracil.. In terms of biological role, excises uracil residues from the DNA which can arise as a result of misincorporation of dUMP residues by DNA polymerase or due to deamination of cytosine. The polypeptide is Uracil-DNA glycosylase (Mycolicibacterium smegmatis (strain ATCC 700084 / mc(2)155) (Mycobacterium smegmatis)).